The following is a 387-amino-acid chain: S-adenosylmethionine synthase (387 aa).

H15 is an ATP binding site. D17 contributes to the Mg(2+) binding site. K(+) is bound at residue E43. E56 and Q99 together coordinate L-methionine. Positions 99–109 (QSPDIALGVNR) are flexible loop. ATP-binding positions include 166–168 (DAK), 232–233 (RF), D241, 247–248 (RK), A264, and K268. An L-methionine-binding site is contributed by D241. K272 provides a ligand contact to L-methionine.

This sequence belongs to the AdoMet synthase family. As to quaternary structure, homotetramer; dimer of dimers. The cofactor is Mg(2+). K(+) is required as a cofactor.

The protein resides in the cytoplasm. It carries out the reaction L-methionine + ATP + H2O = S-adenosyl-L-methionine + phosphate + diphosphate. Its pathway is amino-acid biosynthesis; S-adenosyl-L-methionine biosynthesis; S-adenosyl-L-methionine from L-methionine: step 1/1. In terms of biological role, catalyzes the formation of S-adenosylmethionine (AdoMet) from methionine and ATP. The overall synthetic reaction is composed of two sequential steps, AdoMet formation and the subsequent tripolyphosphate hydrolysis which occurs prior to release of AdoMet from the enzyme. This Nitrosomonas eutropha (strain DSM 101675 / C91 / Nm57) protein is S-adenosylmethionine synthase.